The chain runs to 919 residues: UPF0182 protein Tery_4385 (919 aa).

Helical transmembrane passes span 6-26, 52-72, 96-116, 160-180, 198-218, 243-263, and 268-288; these read YIII…RTLV, IFLW…NYWI, IFVK…AATA, WLFT…ALKG, THIS…FWFE, FAYW…VLSV, and IIWP…FNVL.

Belongs to the UPF0182 family.

Its subcellular location is the cell membrane. This is UPF0182 protein Tery_4385 from Trichodesmium erythraeum (strain IMS101).